Here is a 399-residue protein sequence, read N- to C-terminus: Probable 2-isopropylmalate synthase (399 aa).

In terms of domain architecture, Pyruvate carboxyltransferase spans 20–272 (VRIFDTTLRD…RTGVNTKLLY (253 aa)). A divalent metal cation-binding residues include Asp29, His210, His212, and Asn246.

This sequence belongs to the alpha-IPM synthase/homocitrate synthase family. As to quaternary structure, homodimer. A divalent metal cation is required as a cofactor.

It catalyses the reaction 3-methyl-2-oxobutanoate + acetyl-CoA + H2O = (2S)-2-isopropylmalate + CoA + H(+). It functions in the pathway amino-acid biosynthesis; L-leucine biosynthesis; L-leucine from 3-methyl-2-oxobutanoate: step 1/4. Catalyzes the condensation of the acetyl group of acetyl-CoA with 3-methyl-2-oxobutanoate (2-oxoisovalerate) to form 3-carboxy-3-hydroxy-4-methylpentanoate (2-isopropylmalate). This is Probable 2-isopropylmalate synthase (leuA) from Ignicoccus hospitalis (strain KIN4/I / DSM 18386 / JCM 14125).